The sequence spans 847 residues: Phenylalanine--tRNA ligase beta subunit (847 aa).

One can recognise a tRNA-binding domain in the interval 40 to 168; the sequence is FGIEGPVVVG…LDPEVGADAV (129 aa). Positions 426 to 501 constitute a B5 domain; that stretch reads ADAEPIRLPD…RIVGFDRIPS (76 aa). Mg(2+) contacts are provided by D479, D485, E488, and E489. The FDX-ACB domain occupies 753-846; that stretch reads AGFPAATQDL…AGQLFGAAIR (94 aa).

This sequence belongs to the phenylalanyl-tRNA synthetase beta subunit family. Type 1 subfamily. Tetramer of two alpha and two beta subunits. Requires Mg(2+) as cofactor.

It localises to the cytoplasm. It catalyses the reaction tRNA(Phe) + L-phenylalanine + ATP = L-phenylalanyl-tRNA(Phe) + AMP + diphosphate + H(+). This chain is Phenylalanine--tRNA ligase beta subunit, found in Leifsonia xyli subsp. xyli (strain CTCB07).